A 249-amino-acid chain; its full sequence is 2,3-bisphosphoglycerate-dependent phosphoglycerate mutase (249 aa).

Substrate contacts are provided by residues 8–15 (RHGESTWN), 21–22 (TG), Arg-60, 87–90 (ERHY), Lys-98, 114–115 (RR), and 183–184 (GN). Residue His-9 is the Tele-phosphohistidine intermediate of the active site. Glu-87 functions as the Proton donor/acceptor in the catalytic mechanism.

This sequence belongs to the phosphoglycerate mutase family. BPG-dependent PGAM subfamily.

The enzyme catalyses (2R)-2-phosphoglycerate = (2R)-3-phosphoglycerate. It participates in carbohydrate degradation; glycolysis; pyruvate from D-glyceraldehyde 3-phosphate: step 3/5. Its function is as follows. Catalyzes the interconversion of 2-phosphoglycerate and 3-phosphoglycerate. The chain is 2,3-bisphosphoglycerate-dependent phosphoglycerate mutase from Methanoregula boonei (strain DSM 21154 / JCM 14090 / 6A8).